The chain runs to 308 residues: Eugenol synthase 1 (308 aa).

Residues 13–16 (TGYI), 35–45 (VRESTVSDPAK), Arg36, 86–88 (QMQ), 111–113 (SEF), Lys133, and 153–155 (NCF) each bind NADP(+). Residue Lys133 is the Proton donor/acceptor of the active site.

The protein belongs to the NmrA-type oxidoreductase family. In flowers, mostly expressed in limbs, and, to a lower extent, in tubes.

The enzyme catalyses eugenol + a carboxylate + NADP(+) = a coniferyl ester + NADPH. The catalysed reaction is eugenol + acetate + NADP(+) = (E)-coniferyl acetate + NADPH. It participates in aromatic compound metabolism; phenylpropanoid biosynthesis. Its function is as follows. Involved in the biosynthesis of the floral volatile eugenol. Catalyzes the synthesis of the phenylpropene eugenol from coniferyl acetate. Phenylpropenes are produced by plants as defense compounds with antimicrobial and antianimal properties, or as floral attractants of pollinators. The sequence is that of Eugenol synthase 1 from Petunia hybrida (Petunia).